We begin with the raw amino-acid sequence, 449 residues long: 8-oxoguanine deaminase (449 aa).

Residues His-64 and His-66 each contribute to the Zn(2+) site. Substrate is bound at residue Gln-69. His-232 is a Zn(2+) binding site. Residues Glu-235 and His-269 each contribute to the substrate site. Residues His-269 and Asp-320 each coordinate Zn(2+).

This sequence belongs to the metallo-dependent hydrolases superfamily. ATZ/TRZ family. Homodimer. Zn(2+) serves as cofactor.

The enzyme catalyses 8-oxoguanine + H2O + H(+) = urate + NH4(+). The protein operates within purine metabolism. Specifically deaminates 8-Oxoguanine (8-oxoG) to uric acid. 8-oxoG is formed via the oxidation of guanine within DNA by reactive oxygen species and leads, if uncorrected, to the incorporation of 8-oxoG:A mismatches and eventually to G:C to T:A transversions. The protein is 8-oxoguanine deaminase of Pseudomonas aeruginosa (strain ATCC 15692 / DSM 22644 / CIP 104116 / JCM 14847 / LMG 12228 / 1C / PRS 101 / PAO1).